We begin with the raw amino-acid sequence, 637 residues long: Poly [ADP-ribose] polymerase 2 (637 aa).

The DNA-binding element occupies 1–140 (MANKLKVDEL…KKEEKIVTAT (140 aa)). In terms of domain architecture, SAP 1 spans 2–36 (ANKLKVDELRLKLAERGLSTTGVKAVLVERLEEAI). Basic and acidic residues predominate over residues 35–46 (AIAEDTKKEESK). The disordered stretch occupies residues 35–56 (AIAEDTKKEESKSKRKRNSSND). The Nuclear localization signal motif lies at 41-62 (KKEESKSKRKRNSSNDTYESNK). Residues 69–103 (FRGMIVKELREEAIKRGLDTTGTKKDLLERLCNDA) enclose the SAP 2 domain. Positions 106–117 (VSNAPVKSSNGT) are enriched in polar residues. The disordered stretch occupies residues 106-134 (VSNAPVKSSNGTDEAEDDNNGFEEEKKEE). Residues 118–127 (DEAEDDNNGF) are compositionally biased toward acidic residues. Residues 158 to 255 (QYHVLQRGDD…KEFIPHPKSY (98 aa)) enclose the WGR domain. One can recognise a PARP alpha-helical domain in the interval 286-404 (QSKLDTRVAK…EIELATKLLS (119 aa)). The 226-residue stretch at 412-637 (DPLYYHYQQL…VIQVKFNYKH (226 aa)) folds into the PARP catalytic domain.

The protein belongs to the ARTD/PARP family.

The protein resides in the nucleus. The catalysed reaction is NAD(+) + (ADP-D-ribosyl)n-acceptor = nicotinamide + (ADP-D-ribosyl)n+1-acceptor + H(+).. It catalyses the reaction L-aspartyl-[protein] + NAD(+) = 4-O-(ADP-D-ribosyl)-L-aspartyl-[protein] + nicotinamide. It carries out the reaction L-glutamyl-[protein] + NAD(+) = 5-O-(ADP-D-ribosyl)-L-glutamyl-[protein] + nicotinamide. Involved in the base excision repair (BER) pathway, by catalyzing the poly(ADP-ribosyl)ation of a limited number of acceptor proteins involved in chromatin architecture and in DNA metabolism. This modification follows DNA damages and appears as an obligatory step in a detection/signaling pathway leading to the reparation of DNA strand breaks. This chain is Poly [ADP-ribose] polymerase 2 (PARP2), found in Arabidopsis thaliana (Mouse-ear cress).